The following is a 370-amino-acid chain: 3-dehydroquinate synthase (370 aa).

NAD(+)-binding positions include 108–112, 132–133, lysine 145, and lysine 154; these read GVIGD and TT. Residues glutamate 187, histidine 249, and histidine 267 each contribute to the Zn(2+) site.

This sequence belongs to the sugar phosphate cyclases superfamily. Dehydroquinate synthase family. Requires Co(2+) as cofactor. It depends on Zn(2+) as a cofactor. The cofactor is NAD(+).

It is found in the cytoplasm. It carries out the reaction 7-phospho-2-dehydro-3-deoxy-D-arabino-heptonate = 3-dehydroquinate + phosphate. It functions in the pathway metabolic intermediate biosynthesis; chorismate biosynthesis; chorismate from D-erythrose 4-phosphate and phosphoenolpyruvate: step 2/7. Functionally, catalyzes the conversion of 3-deoxy-D-arabino-heptulosonate 7-phosphate (DAHP) to dehydroquinate (DHQ). In Cereibacter sphaeroides (strain KD131 / KCTC 12085) (Rhodobacter sphaeroides), this protein is 3-dehydroquinate synthase.